The chain runs to 203 residues: uncharacterized protein (203 aa).

This is an uncharacterized protein from Caldicellulosiruptor sp. (strain Rt8B.4).